We begin with the raw amino-acid sequence, 473 residues long: Photosystem II CP43 reaction center protein (473 aa).

Positions 1-14 (MKILYSLRRFYHVE) are excised as a propeptide. Threonine 15 carries the N-acetylthreonine modification. Threonine 15 bears the Phosphothreonine mark. 5 helical membrane-spanning segments follow: residues 69–93 (LFEV…PHLA), 134–155 (LLGP…KDRN), 178–200 (KALY…RKIT), 255–275 (KPFA…LSYS), and 291–312 (WFNN…ASQA). Residue glutamate 367 coordinates [CaMn4O5] cluster. Residues 447–471 (RARAAAAGFEKGIDRDLEPVLYMTP) form a helical membrane-spanning segment.

The protein belongs to the PsbB/PsbC family. PsbC subfamily. PSII is composed of 1 copy each of membrane proteins PsbA, PsbB, PsbC, PsbD, PsbE, PsbF, PsbH, PsbI, PsbJ, PsbK, PsbL, PsbM, PsbT, PsbX, PsbY, PsbZ, Psb30/Ycf12, at least 3 peripheral proteins of the oxygen-evolving complex and a large number of cofactors. It forms dimeric complexes. The cofactor is Binds multiple chlorophylls and provides some of the ligands for the Ca-4Mn-5O cluster of the oxygen-evolving complex. It may also provide a ligand for a Cl- that is required for oxygen evolution. PSII binds additional chlorophylls, carotenoids and specific lipids..

Its subcellular location is the plastid. The protein localises to the chloroplast thylakoid membrane. Functionally, one of the components of the core complex of photosystem II (PSII). It binds chlorophyll and helps catalyze the primary light-induced photochemical processes of PSII. PSII is a light-driven water:plastoquinone oxidoreductase, using light energy to abstract electrons from H(2)O, generating O(2) and a proton gradient subsequently used for ATP formation. The protein is Photosystem II CP43 reaction center protein of Saccharum hybrid (Sugarcane).